The primary structure comprises 436 residues: D-amino acid dehydrogenase (436 aa).

3–17 (IVVLGAGVVGVTSAY) lines the FAD pocket.

This sequence belongs to the DadA oxidoreductase family. FAD serves as cofactor.

The enzyme catalyses a D-alpha-amino acid + A + H2O = a 2-oxocarboxylate + AH2 + NH4(+). The protein operates within amino-acid degradation; D-alanine degradation; NH(3) and pyruvate from D-alanine: step 1/1. Oxidative deamination of D-amino acids. The sequence is that of D-amino acid dehydrogenase from Cereibacter sphaeroides (strain ATCC 17029 / ATH 2.4.9) (Rhodobacter sphaeroides).